A 371-amino-acid chain; its full sequence is Probable protein phosphatase 2C 11 (371 aa).

A helical membrane pass occupies residues 29–49 (FFFFLFNSQTISSFIIFYLFL). The tract at residues 67–95 (PPLSVAPLRGDANSPPPESSSSPATKSSL) is disordered. The segment covering 85 to 94 (SSSSPATKSS) has biased composition (low complexity). Positions 123-368 (SYGYSSLKGK…DNITCIVVRF (246 aa)) constitute a PPM-type phosphatase domain. Residues Asp159, Gly160, Asp320, and Asp359 each coordinate Mn(2+).

It belongs to the PP2C family. The cofactor is Mg(2+). Requires Mn(2+) as cofactor.

It is found in the membrane. The catalysed reaction is O-phospho-L-seryl-[protein] + H2O = L-seryl-[protein] + phosphate. The enzyme catalyses O-phospho-L-threonyl-[protein] + H2O = L-threonyl-[protein] + phosphate. The chain is Probable protein phosphatase 2C 11 from Arabidopsis thaliana (Mouse-ear cress).